We begin with the raw amino-acid sequence, 212 residues long: Proteasome subunit beta type-2 (212 aa).

This sequence belongs to the peptidase T1B family. The 26S proteasome consists of a 20S proteasome core and two 19S regulatory subunits. The 20S proteasome core is composed of 28 subunits that are arranged in four stacked rings, resulting in a barrel-shaped structure. The two end rings are each formed by seven alpha subunits, and the two central rings are each formed by seven beta subunits. The catalytic chamber with the active sites is on the inside of the barrel.

The protein localises to the cytoplasm. Its subcellular location is the nucleus. Non-catalytic component of the proteasome, a multicatalytic proteinase complex which is characterized by its ability to cleave peptides with Arg, Phe, Tyr, Leu, and Glu adjacent to the leaving group at neutral or slightly basic pH. The proteasome has an ATP-dependent proteolytic activity. This is Proteasome subunit beta type-2 (PBD1) from Oryza sativa subsp. japonica (Rice).